The following is a 350-amino-acid chain: MKKLVATAPRVAALVEYEDRAILANEVKIRVRFGAPKHGTEVVDFRAASPFIDEDFNGEWQMFTPRPADAPRGIEFGKFQLGNMVVGDIIECGSDVTDYAVGDSVCGYGPLSETVIINAVNNYKLRKMPQGSSWKNAVCYNPAQFAMSGVRDANVRVGDFVVVVGLGAIGQIAIQLAKRAGASVVIGVDPIAHRCDIARRHGADFCLNPIGTDVGKEIKTLTGKQGADVIIETSGYADALQSALRGLAYGGTISYVAFAKPFAEGFNLGREAHFNNAKIVFSRACSEPNPDYPRWSRKRIEETCWELLMNGYLNCEDLIDPVVTFANSPESYMQYVDQHPEQSIKMGVTF.

It belongs to the zinc-containing alcohol dehydrogenase family. Zn(2+) is required as a cofactor.

The enzyme catalyses a D-guloside + NAD(+) = a 3-dehydro-D-guloside + NADH + H(+). Catalyzes the NAD(+)-dependent oxidation of the hydroxyl group at C3 of D-gulosides leading to 3-dehydro-D-gulosides. Probably functions in a metabolic pathway that transforms D-gulosides to D-glucosides. Is also able to catalyze the reverse reactions, i.e. the NADH-dependent reduction of the oxo group at C3 of 3-dehydro-D-gulosides leading to D-gulosides. In vitro, can oxidize D-gulose and methyl beta-D-guloside, and reduce methyl alpha-3-dehydro-D-guloside and methyl beta-3-dehydro-D-guloside. However, the actual specific physiological substrates for this metabolic pathway are unknown. The polypeptide is D-guloside 3-dehydrogenase (ycjQ) (Shigella flexneri).